Here is a 106-residue protein sequence, read N- to C-terminus: Large ribosomal subunit protein uL24 (106 aa).

It belongs to the universal ribosomal protein uL24 family. As to quaternary structure, part of the 50S ribosomal subunit.

In terms of biological role, one of two assembly initiator proteins, it binds directly to the 5'-end of the 23S rRNA, where it nucleates assembly of the 50S subunit. Its function is as follows. One of the proteins that surrounds the polypeptide exit tunnel on the outside of the subunit. This Orientia tsutsugamushi (strain Boryong) (Rickettsia tsutsugamushi) protein is Large ribosomal subunit protein uL24.